The chain runs to 275 residues: Chlorobenzene dihydrodiol dehydrogenase (275 aa).

The Proton acceptor role is filled by Tyr-155.

The protein belongs to the short-chain dehydrogenases/reductases (SDR) family.

It carries out the reaction (1R,2R)-3-chlorocyclohexa-3,5-diene-1,2-diol + NAD(+) = 3-chlorocatechol + NADH + H(+). Its pathway is aromatic compound metabolism. In terms of biological role, can transform various dihydrodiols of chlorobenzenes and chlorotoluenes into the respective catechols. The protein is Chlorobenzene dihydrodiol dehydrogenase of Cupriavidus sp. (strain PS12).